Here is a 474-residue protein sequence, read N- to C-terminus: 6-phospho-beta-galactosidase (474 aa).

Gln18, His115, Asn159, Glu160, and Asn296 together coordinate D-galactose 6-phosphate. Residue Glu160 is the Proton donor of the active site. The active-site Nucleophile is the Glu374. 4 residues coordinate D-galactose 6-phosphate: Ser427, Trp428, Lys434, and Tyr436.

Belongs to the glycosyl hydrolase 1 family.

The enzyme catalyses a 6-phospho-beta-D-galactoside + H2O = D-galactose 6-phosphate + an alcohol. It functions in the pathway carbohydrate metabolism; lactose degradation; D-galactose 6-phosphate and beta-D-glucose from lactose 6-phosphate: step 1/1. The polypeptide is 6-phospho-beta-galactosidase (Clostridium acetobutylicum (strain ATCC 824 / DSM 792 / JCM 1419 / IAM 19013 / LMG 5710 / NBRC 13948 / NRRL B-527 / VKM B-1787 / 2291 / W)).